The sequence spans 450 residues: Glucose-6-phosphate isomerase (450 aa).

Thr-39 bears the Phosphothreonine mark. The active-site Proton donor is the Glu-291. Catalysis depends on residues His-312 and Lys-426.

This sequence belongs to the GPI family.

Its subcellular location is the cytoplasm. It catalyses the reaction alpha-D-glucose 6-phosphate = beta-D-fructose 6-phosphate. The protein operates within carbohydrate biosynthesis; gluconeogenesis. It participates in carbohydrate degradation; glycolysis; D-glyceraldehyde 3-phosphate and glycerone phosphate from D-glucose: step 2/4. Catalyzes the reversible isomerization of glucose-6-phosphate to fructose-6-phosphate. The chain is Glucose-6-phosphate isomerase from Bacillus cytotoxicus (strain DSM 22905 / CIP 110041 / 391-98 / NVH 391-98).